The chain runs to 229 residues: Potassium/proton antiporter CemA (229 aa).

The next 3 membrane-spanning stretches (helical) occupy residues 7-27 (LTPFPYLASIVFLPWWISLSF), 106-126 (IVLHFSTNIICFAILSGYYFL), and 189-209 (IISGLVSTFPVILDTILKYWI).

Belongs to the CemA family.

The protein localises to the plastid. It localises to the chloroplast inner membrane. It carries out the reaction K(+)(in) + H(+)(out) = K(+)(out) + H(+)(in). Its function is as follows. Contributes to K(+)/H(+) antiport activity by supporting proton efflux to control proton extrusion and homeostasis in chloroplasts in a light-dependent manner to modulate photosynthesis. Prevents excessive induction of non-photochemical quenching (NPQ) under continuous-light conditions. Indirectly promotes efficient inorganic carbon uptake into chloroplasts. The chain is Potassium/proton antiporter CemA from Calycanthus floridus var. glaucus (Eastern sweetshrub).